A 49-amino-acid polypeptide reads, in one-letter code: Large ribosomal subunit protein bL33B (49 aa).

The protein belongs to the bacterial ribosomal protein bL33 family.

In Listeria welshimeri serovar 6b (strain ATCC 35897 / DSM 20650 / CCUG 15529 / CIP 8149 / NCTC 11857 / SLCC 5334 / V8), this protein is Large ribosomal subunit protein bL33B.